The primary structure comprises 362 residues: tRNA/tmRNA (uracil-C(5))-methyltransferase (362 aa).

Positions 186, 214, 219, 235, and 295 each coordinate S-adenosyl-L-methionine. Catalysis depends on C320, which acts as the Nucleophile. The active-site Proton acceptor is E354.

It belongs to the class I-like SAM-binding methyltransferase superfamily. RNA M5U methyltransferase family. TrmA subfamily.

The catalysed reaction is uridine(54) in tRNA + S-adenosyl-L-methionine = 5-methyluridine(54) in tRNA + S-adenosyl-L-homocysteine + H(+). The enzyme catalyses uridine(341) in tmRNA + S-adenosyl-L-methionine = 5-methyluridine(341) in tmRNA + S-adenosyl-L-homocysteine + H(+). Its function is as follows. Dual-specificity methyltransferase that catalyzes the formation of 5-methyluridine at position 54 (m5U54) in all tRNAs, and that of position 341 (m5U341) in tmRNA (transfer-mRNA). In Dechloromonas aromatica (strain RCB), this protein is tRNA/tmRNA (uracil-C(5))-methyltransferase.